Consider the following 751-residue polypeptide: MADKRKLQGEIDRCLKKVSEGVEQFEDIWQKLHNAANANQKEKYEADLKKEIKKLQRLRDQIKTWVASNEIKDKRQLIENRKLIETQMERFKVVERETKTKAYSKEGLGLAQKVDPAQKEKEEVGQWLTNTIDTLNMQVDQFESEVESLSVQTRKKKGDKDKQDRIEGLKRHIEKHRYHVRMLETILRMLDNDSILVDAIRKIKDDVEYYVDSSQDPDFEENEFLYDDLDLEDIPQALVATSPPSHSHMEDEIFNQSSSTPTSTTSSSPIPPSPANCTTENSEDDKKRGRSTDSEVSQSPAKNGSKPVHSNQHPQSPAVPPTYPSGPPPTTSALSSTPGNNGASTPAAPTSALGPKASPAPSHNSGTPAPYAQAVAPPNASGPSNAQPRPPSAQPSGGSGGGSGGSSSNSNSGTGGGAGKQNGATSYSSVVADSPAEVTLSSSGGSSASSQALGPTSGPHNPAPSTSKESSTAAPSGAGNVASGSGNNSGGPSLLVPLPVNPPSSPTPSFSEAKAAGTLLNGPPQFSTTPEIKAPEPLSSLKSMAERAAISSGIEDPVPTLHLTDRDIILSSTSAPPTSSQPPLQLSEVNIPLSLGVCPLGPVSLTKEQLYQQAMEEAAWHHMPHPSDSERIRQYLPRNPCPTPPYHHQMPPPHSDTVEFYQRLSTETLFFIFYYLEGTKAQYLAAKALKKQSWRFHTKYMMWFQRHEEPKTITDEFEQGTYIYFDYEKWGQRKKEGFTFEYRYLEDRDLQ.

Positions 240–534 (ATSPPSHSHM…QFSTTPEIKA (295 aa)) are disordered. Residues 257 to 268 (SSSTPTSTTSSS) show a composition bias toward low complexity. Positions 284–293 (DDKKRGRSTD) are enriched in basic and acidic residues. Position 292 is a phosphothreonine (T292). Polar residues predominate over residues 294–315 (SEVSQSPAKNGSKPVHSNQHPQ). S299 is modified (phosphoserine). The span at 317 to 330 (PAVPPTYPSGPPPT) shows a compositional bias: pro residues. Positions 339 to 348 (GNNGASTPAA) are enriched in polar residues. Positions 441–450 (SSSGGSSASS) are enriched in low complexity. A compositionally biased stretch (polar residues) spans 463-472 (APSTSKESST). Residues 473–498 (AAPSGAGNVASGSGNNSGGPSLLVPL) show a composition bias toward low complexity. A Phosphoserine modification is found at S540. Positions 659–751 (EFYQRLSTET…YRYLEDRDLQ (93 aa)) are repressor domain.

Belongs to the CNOT2/3/5 family. In terms of assembly, component of the CCR4-NOT complex; distinct complexes seem to exist that differ in the participation of probably mutually exclusive catalytic subunits. In the complex interacts directly with CNOT2. Interacts with TIP120B and NANOS2. Interacts with EBF1. Interacts in an RNA-independent manner with BICC1 (via KH domains).

It is found in the nucleus. The protein localises to the cytoplasm. The protein resides in the P-body. Its function is as follows. Component of the CCR4-NOT complex which is one of the major cellular mRNA deadenylases and is linked to various cellular processes including bulk mRNA degradation, miRNA-mediated repression, translational repression during translational initiation and general transcription regulation. Additional complex functions may be a consequence of its influence on mRNA expression. May be involved in metabolic regulation; may be involved in recruitment of the CCR4-NOT complex to deadenylation target mRNAs involved in energy metabolism. Involved in mitotic progression and regulation of the spindle assembly checkpoint by regulating the stability of MAD1L1 mRNA. Can repress transcription and may link the CCR4-NOT complex to transcriptional regulation; the repressive function may involve histone deacetylases. Involved in the maintenance of embryonic stem (ES) cell identity; prevents their differentiation towards extraembryonic trophectoderm lineages. This chain is CCR4-NOT transcription complex subunit 3 (Cnot3), found in Mus musculus (Mouse).